Consider the following 123-residue polypeptide: Large ribosomal subunit protein bL12 (123 aa).

The protein belongs to the bacterial ribosomal protein bL12 family. Homodimer. Part of the ribosomal stalk of the 50S ribosomal subunit. Forms a multimeric L10(L12)X complex, where L10 forms an elongated spine to which 2 to 4 L12 dimers bind in a sequential fashion. Binds GTP-bound translation factors.

Functionally, forms part of the ribosomal stalk which helps the ribosome interact with GTP-bound translation factors. Is thus essential for accurate translation. This Geobacillus thermodenitrificans (strain NG80-2) protein is Large ribosomal subunit protein bL12.